Consider the following 137-residue polypeptide: Nucleoside diphosphate kinase (137 aa).

Residues Lys-9, Phe-57, Arg-85, Thr-91, Arg-102, and Asn-112 each coordinate ATP. The active-site Pros-phosphohistidine intermediate is the His-115.

This sequence belongs to the NDK family. Homotetramer. Mg(2+) is required as a cofactor.

The protein resides in the cytoplasm. It carries out the reaction a 2'-deoxyribonucleoside 5'-diphosphate + ATP = a 2'-deoxyribonucleoside 5'-triphosphate + ADP. The enzyme catalyses a ribonucleoside 5'-diphosphate + ATP = a ribonucleoside 5'-triphosphate + ADP. In terms of biological role, major role in the synthesis of nucleoside triphosphates other than ATP. The ATP gamma phosphate is transferred to the NDP beta phosphate via a ping-pong mechanism, using a phosphorylated active-site intermediate. This Wolinella succinogenes (strain ATCC 29543 / DSM 1740 / CCUG 13145 / JCM 31913 / LMG 7466 / NCTC 11488 / FDC 602W) (Vibrio succinogenes) protein is Nucleoside diphosphate kinase.